The following is a 150-amino-acid chain: UPF0178 protein AZOSEA36080 (150 aa).

The protein belongs to the UPF0178 family.

The protein is UPF0178 protein AZOSEA36080 of Aromatoleum aromaticum (strain DSM 19018 / LMG 30748 / EbN1) (Azoarcus sp. (strain EbN1)).